A 283-amino-acid polypeptide reads, in one-letter code: Pantothenate synthetase (283 aa).

30 to 37 (MGNLHDGH) contacts ATP. His37 serves as the catalytic Proton donor. Position 61 (Gln61) interacts with (R)-pantoate. Gln61 is a binding site for beta-alanine. ATP is bound at residue 149-152 (GEKD). A (R)-pantoate-binding site is contributed by Gln155. Residue 186 to 189 (LSSR) participates in ATP binding.

Belongs to the pantothenate synthetase family. Homodimer.

It is found in the cytoplasm. The enzyme catalyses (R)-pantoate + beta-alanine + ATP = (R)-pantothenate + AMP + diphosphate + H(+). Its pathway is cofactor biosynthesis; (R)-pantothenate biosynthesis; (R)-pantothenate from (R)-pantoate and beta-alanine: step 1/1. Functionally, catalyzes the condensation of pantoate with beta-alanine in an ATP-dependent reaction via a pantoyl-adenylate intermediate. The sequence is that of Pantothenate synthetase from Escherichia coli O45:K1 (strain S88 / ExPEC).